A 446-amino-acid chain; its full sequence is MAASATTMLLKYPTLCAMPNSSSSSNNNDLPTSIPLNNNNNLLSNKNKILQTPNINTSTNKIITKAVASPVFPTLKTTSNTPSSIRSLVHEFDPEIPPEDALTPPSTWYTEPAFYSHELERIFYKGWQVAGYSEQVKEKNQYFTGSLGNVEYLVSRDGQGELHAFHNVCTHRASILACGSGKKSCFVCPYHGWVYGLDGSLAKASKATETQNLDPKELGLAPLKVAEWGPFILISLDRSLDANADVGTEWIGKSAEDVKAHAFDPNLKFTHRSEFPMECNWKVFCDNYLDSSYHVPYAHKYYAAELDFDTYNTEMIEKCVIQRVGSSSNKPDGFDRLGTEAFYAFIYPNFAVERYGTWMTTMHVVPMGQRKCKLVVDYYLEKAMLDDKAYIDKGIAINDNVQKEDKVLCESVQRGLETPAYRSGRYVMPIEKGIHHFHCWLHETLQ.

The transit peptide at Met1 to Lys65 directs the protein to the chloroplast. The 108-residue stretch at Trp127 to Ile234 folds into the Rieske domain. 4 residues coordinate [2Fe-2S] cluster: Cys169, His171, Cys188, and His191. Positions 294 and 299 each coordinate Fe cation.

The protein belongs to the choline monooxygenase family. [2Fe-2S] cluster serves as cofactor. The cofactor is Fe cation. Requires Mg(2+) as cofactor. As to expression, expressed in roots and leaves.

Its subcellular location is the plastid. It is found in the chloroplast stroma. The enzyme catalyses choline + 2 reduced [2Fe-2S]-[ferredoxin] + O2 + 2 H(+) = betaine aldehyde hydrate + 2 oxidized [2Fe-2S]-[ferredoxin] + H2O. It functions in the pathway amine and polyamine biosynthesis; betaine biosynthesis via choline pathway; betaine aldehyde from choline (monooxygenase route): step 1/1. In terms of biological role, catalyzes the first step of the osmoprotectant glycine betaine synthesis. In Beta vulgaris (Sugar beet), this protein is Choline monooxygenase, chloroplastic (CMO).